A 117-amino-acid chain; its full sequence is G antigen 12I (117 aa).

The disordered stretch occupies residues Met1–Cys117. 2 stretches are compositionally biased toward acidic residues: residues Phe32 to Glu45 and Glu87 to Glu96. Over residues Glu103–Cys117 the composition is skewed to basic and acidic residues.

This sequence belongs to the GAGE family. In terms of assembly, forms tetramers.

The sequence is that of G antigen 12I (GAGE12I) from Homo sapiens (Human).